Here is a 778-residue protein sequence, read N- to C-terminus: 5-methyltetrahydropteroyltriglutamate--homocysteine methyltransferase (778 aa).

5-methyltetrahydropteroyltri-L-glutamate-binding positions include 17–20 (RELK) and lysine 118. Residues 436 to 438 (IGS) and glutamate 489 contribute to the L-homocysteine site. Residues 436 to 438 (IGS) and glutamate 489 each bind L-methionine. 5-methyltetrahydropteroyltri-L-glutamate is bound by residues 520–521 (RC) and tryptophan 566. Aspartate 604 lines the L-homocysteine pocket. Residue aspartate 604 participates in L-methionine binding. A 5-methyltetrahydropteroyltri-L-glutamate-binding site is contributed by glutamate 610. Residues histidine 646, cysteine 648, and glutamate 670 each contribute to the Zn(2+) site. Catalysis depends on histidine 699, which acts as the Proton donor. Cysteine 731 is a Zn(2+) binding site.

The protein belongs to the vitamin-B12 independent methionine synthase family. Requires Zn(2+) as cofactor.

It carries out the reaction 5-methyltetrahydropteroyltri-L-glutamate + L-homocysteine = tetrahydropteroyltri-L-glutamate + L-methionine. Its pathway is amino-acid biosynthesis; L-methionine biosynthesis via de novo pathway; L-methionine from L-homocysteine (MetE route): step 1/1. Catalyzes the transfer of a methyl group from 5-methyltetrahydrofolate to homocysteine resulting in methionine formation. In Vibrio vulnificus (strain CMCP6), this protein is 5-methyltetrahydropteroyltriglutamate--homocysteine methyltransferase.